Reading from the N-terminus, the 313-residue chain is tRNA(Ile)-lysidine synthase (313 aa).

An ATP-binding site is contributed by 37-42; sequence SGGPDS.

This sequence belongs to the tRNA(Ile)-lysidine synthase family.

The protein localises to the cytoplasm. The catalysed reaction is cytidine(34) in tRNA(Ile2) + L-lysine + ATP = lysidine(34) in tRNA(Ile2) + AMP + diphosphate + H(+). Its function is as follows. Ligates lysine onto the cytidine present at position 34 of the AUA codon-specific tRNA(Ile) that contains the anticodon CAU, in an ATP-dependent manner. Cytidine is converted to lysidine, thus changing the amino acid specificity of the tRNA from methionine to isoleucine. This is tRNA(Ile)-lysidine synthase from Corynebacterium efficiens (strain DSM 44549 / YS-314 / AJ 12310 / JCM 11189 / NBRC 100395).